A 190-amino-acid polypeptide reads, in one-letter code: GTP cyclohydrolase 1 (190 aa).

The Zn(2+) site is built by Cys-75, His-78, and Cys-146.

The protein belongs to the GTP cyclohydrolase I family. Toroid-shaped homodecamer, composed of two pentamers of five dimers.

The enzyme catalyses GTP + H2O = 7,8-dihydroneopterin 3'-triphosphate + formate + H(+). The protein operates within cofactor biosynthesis; 7,8-dihydroneopterin triphosphate biosynthesis; 7,8-dihydroneopterin triphosphate from GTP: step 1/1. The sequence is that of GTP cyclohydrolase 1 from Campylobacter jejuni subsp. jejuni serotype O:23/36 (strain 81-176).